Consider the following 293-residue polypeptide: Homoserine kinase (293 aa).

Proline 84 to alanine 94 is an ATP binding site.

Belongs to the GHMP kinase family. Homoserine kinase subfamily.

The protein resides in the cytoplasm. It catalyses the reaction L-homoserine + ATP = O-phospho-L-homoserine + ADP + H(+). It participates in amino-acid biosynthesis; L-threonine biosynthesis; L-threonine from L-aspartate: step 4/5. In terms of biological role, catalyzes the ATP-dependent phosphorylation of L-homoserine to L-homoserine phosphate. This is Homoserine kinase from Nitratiruptor sp. (strain SB155-2).